The primary structure comprises 133 residues: Small ribosomal subunit protein bS18 (133 aa).

The interval 1–63 (MARPDMGGPK…GDEGGGRRGF (63 aa)) is disordered. Residues 9 to 39 (PKTGGFGGPRSGGFGGGGGGGFGGGGFGGGR) are compositionally biased toward gly residues. The span at 40-59 (GGDRGDRGDRDDRGGDEGGG) shows a compositional bias: basic and acidic residues.

Belongs to the bacterial ribosomal protein bS18 family. In terms of assembly, part of the 30S ribosomal subunit. Forms a tight heterodimer with protein bS6.

Binds as a heterodimer with protein bS6 to the central domain of the 16S rRNA, where it helps stabilize the platform of the 30S subunit. The protein is Small ribosomal subunit protein bS18 of Anaeromyxobacter dehalogenans (strain 2CP-1 / ATCC BAA-258).